We begin with the raw amino-acid sequence, 288 residues long: Bifunctional protein FolD (288 aa).

Residues 166–168 and Ile232 contribute to the NADP(+) site; that span reads GAS.

This sequence belongs to the tetrahydrofolate dehydrogenase/cyclohydrolase family. In terms of assembly, homodimer.

It catalyses the reaction (6R)-5,10-methylene-5,6,7,8-tetrahydrofolate + NADP(+) = (6R)-5,10-methenyltetrahydrofolate + NADPH. The catalysed reaction is (6R)-5,10-methenyltetrahydrofolate + H2O = (6R)-10-formyltetrahydrofolate + H(+). The protein operates within one-carbon metabolism; tetrahydrofolate interconversion. Its function is as follows. Catalyzes the oxidation of 5,10-methylenetetrahydrofolate to 5,10-methenyltetrahydrofolate and then the hydrolysis of 5,10-methenyltetrahydrofolate to 10-formyltetrahydrofolate. The chain is Bifunctional protein FolD from Escherichia coli O139:H28 (strain E24377A / ETEC).